Consider the following 271-residue polypeptide: Phosphonoacetaldehyde hydrolase (271 aa).

The active-site Nucleophile is the Asp-12. Residues Asp-12 and Ala-14 each coordinate Mg(2+). Lys-54 functions as the Schiff-base intermediate with substrate in the catalytic mechanism. Asp-188 provides a ligand contact to Mg(2+).

The protein belongs to the HAD-like hydrolase superfamily. PhnX family. As to quaternary structure, homodimer. Requires Mg(2+) as cofactor.

It carries out the reaction phosphonoacetaldehyde + H2O = acetaldehyde + phosphate + H(+). In terms of biological role, involved in phosphonate degradation. The protein is Phosphonoacetaldehyde hydrolase of Vibrio parahaemolyticus serotype O3:K6 (strain RIMD 2210633).